The primary structure comprises 412 residues: Poly-beta-1,6-N-acetyl-D-glucosamine synthase (412 aa).

4 helical membrane-spanning segments follow: residues 6 to 26, 298 to 318, 332 to 352, and 366 to 386; these read FLLF…IYFY, IISI…FITA, IFLL…TVAL, and LIFV…VVLV.

It belongs to the glycosyltransferase 2 family.

It is found in the cell membrane. In terms of biological role, N-acetylglucosaminyltransferase that catalyzes the polymerization of single monomer units of UDP-N-acetylglucosamine to produce the linear homomer poly-beta-1,6-N-acetyl-D-glucosamine (PNAG, also referred to as PIA), a biofilm adhesin polysaccharide. Requires IcaD for full activity. This Staphylococcus aureus (strain NCTC 8325 / PS 47) protein is Poly-beta-1,6-N-acetyl-D-glucosamine synthase (icaA).